A 232-amino-acid polypeptide reads, in one-letter code: 2-C-methyl-D-erythritol 4-phosphate cytidylyltransferase (232 aa).

Belongs to the IspD/TarI cytidylyltransferase family. IspD subfamily.

The enzyme catalyses 2-C-methyl-D-erythritol 4-phosphate + CTP + H(+) = 4-CDP-2-C-methyl-D-erythritol + diphosphate. The protein operates within isoprenoid biosynthesis; isopentenyl diphosphate biosynthesis via DXP pathway; isopentenyl diphosphate from 1-deoxy-D-xylulose 5-phosphate: step 2/6. In terms of biological role, catalyzes the formation of 4-diphosphocytidyl-2-C-methyl-D-erythritol from CTP and 2-C-methyl-D-erythritol 4-phosphate (MEP). This chain is 2-C-methyl-D-erythritol 4-phosphate cytidylyltransferase, found in Synechococcus elongatus (strain ATCC 33912 / PCC 7942 / FACHB-805) (Anacystis nidulans R2).